The chain runs to 1072 residues: DNA-directed RNA polymerase subunit beta (1072 aa).

It belongs to the RNA polymerase beta chain family. In terms of assembly, in plastids the minimal PEP RNA polymerase catalytic core is composed of four subunits: alpha, beta, beta', and beta''. When a (nuclear-encoded) sigma factor is associated with the core the holoenzyme is formed, which can initiate transcription.

The protein resides in the plastid. It localises to the chloroplast. It catalyses the reaction RNA(n) + a ribonucleoside 5'-triphosphate = RNA(n+1) + diphosphate. DNA-dependent RNA polymerase catalyzes the transcription of DNA into RNA using the four ribonucleoside triphosphates as substrates. The protein is DNA-directed RNA polymerase subunit beta of Lobularia maritima (Sweet alyssum).